The chain runs to 254 residues: uncharacterized protein (254 aa).

The next 8 helical transmembrane spans lie at 41–61, 64–84, 91–111, 125–145, 146–166, 172–192, 204–224, and 232–252; these read VFVF…IKII, IFQA…EYFF, IYCG…LYIL, ILIG…FVLA, PAAL…LWSF, FILL…IQLL, MLLA…VLTP, and IIMS…LFLL.

The protein belongs to the TatC family.

It is found in the plastid. Its subcellular location is the chloroplast membrane. This is an uncharacterized protein from Porphyra purpurea (Red seaweed).